A 431-amino-acid chain; its full sequence is Histidinol dehydrogenase (431 aa).

Residues Tyr124, Gln187, and Asn210 each coordinate NAD(+). 3 residues coordinate substrate: Ser236, Gln258, and His261. Zn(2+) is bound by residues Gln258 and His261. Residues Glu325 and His326 each act as proton acceptor in the active site. The substrate site is built by His326, Asp359, Glu413, and His418. Asp359 is a binding site for Zn(2+). His418 contributes to the Zn(2+) binding site.

The protein belongs to the histidinol dehydrogenase family. It depends on Zn(2+) as a cofactor.

It carries out the reaction L-histidinol + 2 NAD(+) + H2O = L-histidine + 2 NADH + 3 H(+). It functions in the pathway amino-acid biosynthesis; L-histidine biosynthesis; L-histidine from 5-phospho-alpha-D-ribose 1-diphosphate: step 9/9. Its function is as follows. Catalyzes the sequential NAD-dependent oxidations of L-histidinol to L-histidinaldehyde and then to L-histidine. The sequence is that of Histidinol dehydrogenase from Legionella pneumophila (strain Lens).